A 212-amino-acid chain; its full sequence is UPF0111 protein PH1389 (212 aa).

This sequence belongs to the UPF0111 family.

In Pyrococcus horikoshii (strain ATCC 700860 / DSM 12428 / JCM 9974 / NBRC 100139 / OT-3), this protein is UPF0111 protein PH1389.